The chain runs to 3616 residues: MQSGFDRCLCTPNARVFWEHGQVYCTRCLAARPLLPLSQQNPRLGALGLFYRPATPLTWEAPITYPTKECRPGGLCWLSGIYPIARMTSGNHNFQARLNFVASVVYRDGKLTSKHLEEEFEVYSRGCRWYPITGPVPGIALYANAVHVSDEPFPGCTHVLSNLPLPQQPLRKGLCPFSDARAEVWRYKGNTIFVSEQGYLWTTGSNDSVPEPWGEARRLCEKIIASLPADHLVKIEFSNYPFDYSFTGGDGAGYVLFPCKKNDTKFSKCWEKVFEDHSSWKVACEEADLADRMGYRTPAGVAGPYLARRLQYRGLRAVVKPEQNDYVVWALGVPESYIRHISRAGEPVENFFVRVGEFSIVSNCVATPYPKFRFQTRKYYGYSPPGDGACGLHCISAIINDIFGDALCTKLTNCSRDSSEWLSDQDMYQLVMTARLPATLGHCPSATYKLDCVNQHWTVTKRKGDRALGGLSPECVRGVCGGECKFVPTYPREINLELAAKSPISALAFSLGVEPYCDCWNFTNSVLVNDSLAVETARAGEAYRSAMGIPKDDWVLLAELMTENCLTRREVLDKLQRGLRLHATSKPGSPASVSPASSIDFSAAGLLLDGTESDKEAVVAVNNDCYTVLGFDKNSATKSEQELATGLFSELVEPMETSTSKHESRKILEAASRALKSAKPKRKRNKKKKTSSPTPTPPETPTREVPGAIEVVSGDEEAGACESATIVPDKAQARPPPRPKRQALKKAEQGFILKDIIWNPTESGVKCLTIVEDVRAFLKSITPPGGALGTRARITAHIVEQFHVIRESTPELVLAHAEHQAKNMHELLLSEKAKLILGIGEDTLKKLVSSQRSLPRSIGFGAWLSDQQKTADSCGEREFVEVPLKSGAEPTPSKRDLGVSLGDQLSQDGAPRLSSSTACEIKERVPPIKDSGGGLGQKFMAWLNHQVFLLSSHLLAMWSVVLGSRQKLNWADYVYTLFCLCCVLLCFHFPAIGFIPLAGCVFGSPWRVRLSVFSVWLCVAVVVFQEVLPEPGSVCSSASAECAAALERYSGNGVHRPVNHIGVGLVGTVAGFVARVVGGPRHYWFYFLRLMVVLDLGLVFLAVALRGRCKKCFCKCVRVAPHEVHLRVFPLTKVARPTLEAVCDMYSAPRVDPILVATGIKGCWQGKVSPHQVTDKPVSYSNLEEKKISNKTVVPPPTDPQQAVKCLKVLQCGGSIQDVGVPEVKKVSKVPYKAPFFPNVSIDPECYIVVDPVTYSAAMRGGYGVSHLIVGTGDFAEVNGLRFVSGGHVADFVCLGLYVMLNFLISAWLSSPVSCGRGTNDPWCKNPFSYPVVGQGVMCNSHLCISEDGLTSPMVLSYSLIDWALMIAVIATVAIFIAKVSLLVDVICVFLCLLMYVFPPLSVIAFAFPFALCKVHLHPVTLVWVQFFLLAVNFWAGVAVAVILISSWFLARATSSTGLVTPYDVHLVTSTPRGASSLASAPEGTYLAAVRRSALTGRCCMFVPTNFGSVLEGSLRTRGCAKNVVSVFGSASGSGGVFTIHGNPVVVTATHLLSDGKARVSCVGFSQCLTFKSVGDYAFARVAEWKGDAPKVELSDRRGRAYCSPQVEWSLVLLGPNTAFCFTKCGDSGSPVVDEDGNLIGVHTGSNKRGSGMITTHNGKTLGMSNVKLSEMCQHYGGSGVPVSTVRLPKHLIVDVEAVASDLVAVVESLPTPEGALSSVQLLCVFFFLWRLIHVPFVPVIAVAFFFLNEILPVVLARLMFSFALSLFSVFTGFSVQVLLLRLVIAALNRSAVSFGSFLLGQLFHCCLMPSHLETLGPVPGYFYPSTTEVASKEIFVTLLAIHVLALLLSLFKRPMLADVLVGNGSFDAAFFLKYFAEGNLRDGVSDSCNMTPEGLTAALAITLSDDDLEFLQRHSEFKCFVSASNMRNGAKEFIESAYARALRAQLAATDKIKASKSILAKLESFAGGVVTKVEPGDVVVVLGKKIVGDLVEITINDVKHVIRVIETRVMAGTQFSVGTICGDLENACEDPSGLVKTSKKQRRRQKRTGLGTEVVGTVEIDGVSYNKVWHKATGDVTYEGFLVSENSRLRTLGTSAIGRFQEFIRKHGSKVKTSVEKYPVGKNKHIEFAVTTYNLDGEEFDVPDHEPLEWTITIGDSDLEAERLTVDQALRHMGHDSLLTPKEKEKLARIIESLNGLQQSSALNCLTTSGLERCSRGGVTVSKDAVKIVKYHSRTFSIGDVNLKVMSFDEYRRTMGKPGHLLVAKLTDGVVVMRKHEPSLVDVILTGEDAEFFPRTHGPGNTGIHRFVWDFESPPVDLELELSEQIITACSMRRGDAPALDLPYKLHPVRGDPYRHRGVLFNTRFGDITYLIPEKTKEPLHAAACYNKGVPVSDSETLVATTLPHGFELYVPTLPPSVLEYLDSRPDTPRMLTKHGCASAAEKDLQKFDLSRQGFVLPGVLYMVRRYLSRLIGVRRRLFMPSTYPAKNSMAGINGGRFPLTWLQSHPDIDALCKRACEEHWQTVTPCTLKKQYCSKSKTRTILGTNNFVALGLRSALSGVTQGFMRKGIGTPICLGKNKFTPLPVRIGGRCLEADLASCDRSTPAIIRWFTTNLLFELAGAEEWIPSYVLNCCHDVVSTMSGCFDKRGGLSSGDPVTSISNTVYSLIIYAQHMVLSAFRCGHKIGGLFLQDSLEMEQLFELQPLLVYSDDVVFYNESDELPNYHFFVDHLDLMLGFKTDRSKTVITSEPKLPGCRISGGRVLVPQRDRIVAALAYQMKASCVGEYFASAAAILMDACACCDHDESWYFDLVCGIAECAGSPWFRFPGPSFFLDMWNRLSAEEKKKCRTCAHCGAPATLVSSCGLNLCDYHGHGHPHCPVVLPCGHAVGSGVCEQCSSSAMNLNTELDILLMCVPYHPPKVELLSVNDKVSSLPPGAYQARGGVVSVRRDILGNVVDLPDGDYQVMKVAQTCADISMVSVNSNILRSQFVTGAPGTGKTTYLLSVVRDDDVIYTPTHRTMLDVVKALKVCRFDPPKDTPLEFPVPGRTGPTVRLIGAGFVPGRVSYLDEAAYCNPLDVLKVLSKTPLVCVGDLNQLPPVGFNGPCFAFSLMPGRQLIEVFRFGPAVVNSIKKFYKEELVPRGPDTGVKFLKQYQPYGQVLTPYHRDRVDGAITIDSSQGCTYDVVTVYLPTPKSLNSARALVALTRARHYVFIYDPYDQLQQYLQVFEHEPADAWAFWCGDQPKMIVGGVVKQLAGHSRTTDLKLQQLMGLEGTASPLPQVGHNLGFYYSPDLIQFAKIPPELCKHWPVVTAQNRTEWPDRLVCGMNKMDKNSRAVFCAGYYVGPSIFLGVPGVVSYYLTKYLKGESVPLPDSIMSTGRIRLNVREYLDENEIEFAKKCPQPFIGEVKGSNVGGCHHVTSRFLPPVLVPGSVVKVGVSCPGKAAKGLCTVTDVYLPELDSYLHPPSKSMDYKLLVDFQPVKLMVWKDATAYFHEGIRPMEAMSRFLKVPEGEGVFFDLDEFVTNAKVSKLPCKYSVSAHQFLTEVVLSMTPTSEAPPDYELLFARAYCVPGLDVGTLNAYIYKRGPSTYTTSNFARLVKDTAVPVGCKGSGYMFPK.

Residues 8 to 28 (CLCTPNARVFWEHGQVYCTRC) form a C4-type; atypical zinc finger. One can recognise a Peptidase C31 domain in the interval 69–181 (ECRPGGLCWL…KGLCPFSDAR (113 aa)). Active-site for Nsp1-alpha papain-like cysteine proteinase activity residues include Cys76 and His147. The Peptidase C32 domain maps to 262-381 (NDTKFSKCWE…FRFQTRKYYG (120 aa)). Active-site for Nsp1-beta papain-like cysteine proteinase activity residues include Cys269 and His340. The Peptidase C33 domain maps to 381-486 (GYSPPGDGAC…RGVCGGECKF (106 aa)). Catalysis depends on for Nsp2 cysteine proteinase activity residues Cys390 and His456. Disordered stretches follow at residues 672–706 (SRAL…REVP) and 883–912 (PLKS…GAPR). Residues 676-690 (KSAKPKRKRNKKKKT) show a composition bias toward basic residues. The span at 903–912 (DQLSQDGAPR) shows a compositional bias: polar residues. 9 helical membrane passes run 942–962 (WLNH…SVVL), 977–997 (LFCL…FIPL), 1010–1030 (LSVF…VLPE), 1060–1080 (HIGV…VGGP), 1085–1105 (FYFL…AVAL), 1289–1309 (VADF…SAWL), 1364–1384 (ALMI…SLLV), 1386–1406 (VICV…VIAF), and 1425–1445 (VQFF…VILI). Positions 981 to 1105 (CCVLLCFHFP…LGLVFLAVAL (125 aa)) are HD1. The HD2 stretch occupies residues 1289–1448 (VADFVCLGLY…AVAVILISSW (160 aa)). One can recognise a Peptidase S32 domain in the interval 1513–1714 (GSLRTRGCAK…AVVESLPTPE (202 aa)). Residues His1551, Asp1576, and Ser1628 each act as charge relay system; for 3C-like serine proteinase activity in the active site. 4 helical membrane passes run 1715 to 1735 (GALS…LIHV), 1737 to 1757 (FVPV…VVLA), 1761 to 1781 (FSFA…VLLL), and 1832 to 1852 (SKEI…LSLF). An HD3 region spans residues 1737–1852 (FVPVIAVAFF…HVLALLLSLF (116 aa)). Residues 2194–2352 (SLNGLQQSSA…LPYKLHPVRG (159 aa)) enclose the NiRAN domain. One can recognise a RdRp catalytic domain in the interval 2590-2724 (GRCLEADLAS…YNESDELPNY (135 aa)). An AV ZBD domain is found at 2844–2907 (KKKCRTCAHC…SSAMNLNTEL (64 aa)). Residues Cys2850, Cys2853, Cys2863, Cys2868, His2871, His2873, His2875, His2877, Cys2884, His2886, Cys2893, and Cys2896 each coordinate Zn(2+). The 153-residue stretch at 2964–3116 (QVMKVAQTCA…AFSLMPGRQL (153 aa)) folds into the (+)RNA virus helicase ATP-binding domain. 2992 to 2999 (GAPGTGKT) contributes to the ATP binding site. Residues 3117-3248 (IEVFRFGPAV…CGDQPKMIVG (132 aa)) form the (+)RNA virus helicase C-terminal domain. An AV-Nsp11N/CoV-Nsp15M domain is found at 3272–3368 (EGTASPLPQV…LTKYLKGESV (97 aa)). A NendoU domain is found at 3370–3492 (LPDSIMSTGR…MVWKDATAYF (123 aa)).

Belongs to the arteriviridae polyprotein family. In terms of processing, specific enzymatic cleavages in vivo by its own proteases yield mature proteins. There are two alternative pathways for processing. Either nsp4-5 is cleaved, which represents the major pathway or the nsp5-6 and nsp6-7 are processed, which represents the minor pathway. The major pathway occurs when nsp2 acts as a cofactor for nsp4.

The protein localises to the host membrane. It localises to the host cytoplasm. Its subcellular location is the host perinuclear region. The enzyme catalyses RNA(n) + a ribonucleoside 5'-triphosphate = RNA(n+1) + diphosphate. The catalysed reaction is ATP + H2O = ADP + phosphate + H(+). It carries out the reaction uridylyl-uridylyl-ribonucleotide-RNA = a 3'-end uridylyl-2',3'-cyclophospho-uridine-RNA + a 5'-end dephospho-ribonucleoside-RNA. Functionally, the replicase polyprotein 1ab is a multifunctional protein: it contains the activities necessary for the transcription of negative stranded RNA, leader RNA, subgenomic mRNAs and progeny virion RNA as well as proteinases responsible for the cleavage of the polyprotein into functional products. In terms of biological role, the Nsp1 chain is essential for viral subgenomic mRNA synthesis. Its function is as follows. The 3C-like serine proteinase chain is responsible for the majority of cleavages as it cleaves the C-terminus of the polyprotein. The helicase chain, which contains a zinc finger structure, displays RNA and DNA duplex-unwinding activities with 5' to 3' polarity. Functionally, plays a role in viral transcription/replication and prevents the simultaneous activation of host cell dsRNA sensors, such as MDA5/IFIH1, OAS, and PKR. Acts by degrading the 5'-polyuridines generated during replication of the poly(A) region of viral genomic and subgenomic RNAs. Catalyzes a two-step reaction in which a 2'3'-cyclic phosphate (2'3'-cP) is first generated by 2'-O transesterification, which is then hydrolyzed to a 3'-phosphate (3'-P). If not degraded, poly(U) RNA would hybridize with poly(A) RNA tails and activate host dsRNA sensors. The protein is Replicase polyprotein 1ab (rep) of Mus musculus domesticus (western European house mouse).